A 233-amino-acid polypeptide reads, in one-letter code: Orotidine 5'-phosphate decarboxylase (233 aa).

Substrate-binding positions include aspartate 12, lysine 34, 61-70 (DWKLHDIGAT), threonine 116, arginine 181, glutamine 190, glycine 210, and arginine 211. The Proton donor role is filled by lysine 63.

It belongs to the OMP decarboxylase family. Type 1 subfamily. Homodimer.

The enzyme catalyses orotidine 5'-phosphate + H(+) = UMP + CO2. It functions in the pathway pyrimidine metabolism; UMP biosynthesis via de novo pathway; UMP from orotate: step 2/2. In terms of biological role, catalyzes the decarboxylation of orotidine 5'-monophosphate (OMP) to uridine 5'-monophosphate (UMP). In Caulobacter vibrioides (strain ATCC 19089 / CIP 103742 / CB 15) (Caulobacter crescentus), this protein is Orotidine 5'-phosphate decarboxylase.